The sequence spans 111 residues: Large ribosomal subunit protein uL23 (111 aa).

The protein belongs to the universal ribosomal protein uL23 family. Part of the 50S ribosomal subunit. Contacts protein L29, and trigger factor when it is bound to the ribosome.

In terms of biological role, one of the early assembly proteins it binds 23S rRNA. One of the proteins that surrounds the polypeptide exit tunnel on the outside of the ribosome. Forms the main docking site for trigger factor binding to the ribosome. The sequence is that of Large ribosomal subunit protein uL23 from Nitrosomonas eutropha (strain DSM 101675 / C91 / Nm57).